We begin with the raw amino-acid sequence, 366 residues long: tRNA/tmRNA (uracil-C(5))-methyltransferase (366 aa).

Positions 190, 218, 223, 239, and 299 each coordinate S-adenosyl-L-methionine. Cys324 acts as the Nucleophile in catalysis. Glu358 acts as the Proton acceptor in catalysis.

This sequence belongs to the class I-like SAM-binding methyltransferase superfamily. RNA M5U methyltransferase family. TrmA subfamily.

It catalyses the reaction uridine(54) in tRNA + S-adenosyl-L-methionine = 5-methyluridine(54) in tRNA + S-adenosyl-L-homocysteine + H(+). The catalysed reaction is uridine(341) in tmRNA + S-adenosyl-L-methionine = 5-methyluridine(341) in tmRNA + S-adenosyl-L-homocysteine + H(+). In terms of biological role, dual-specificity methyltransferase that catalyzes the formation of 5-methyluridine at position 54 (m5U54) in all tRNAs, and that of position 341 (m5U341) in tmRNA (transfer-mRNA). This Escherichia coli O6:H1 (strain CFT073 / ATCC 700928 / UPEC) protein is tRNA/tmRNA (uracil-C(5))-methyltransferase.